A 1063-amino-acid chain; its full sequence is JmjC domain-containing histone demethylation protein 1 (1063 aa).

Residues 86-266 (LYNVLSLEYS…TQLRVYQVEN (181 aa)) enclose the JmjC domain. Residue Thr160 coordinates substrate. Residues His163 and Asp165 each contribute to the Fe cation site. Lys180 lines the substrate pocket. His234 lines the Fe cation pocket. The segment covering 379-389 (GLEEEAEDEDV) has biased composition (acidic residues). Disordered stretches follow at residues 379–400 (GLEEEAEDEDVKPETKKEAEER), 554–750 (ESDE…NPYN), and 776–1040 (VELH…KRAK). The span at 390 to 400 (KPETKKEAEER) shows a compositional bias: basic and acidic residues. Composition is skewed to acidic residues over residues 594 to 605 (PEYDEDMEEYDP) and 613 to 631 (ELEEEEEEEEGEEEEEEEY). Positions 636-646 (TRRSSTRGSAS) are enriched in low complexity. 5 stretches are compositionally biased toward basic and acidic residues: residues 647-665 (TKEEPQEEKEEKEAAPKKE), 674-712 (EKSSKPEKDTTEAKLKKEKKKKEMERRLRDSELEAELRA), 776-806 (VELHIEKNLYKLEPKRDESESREPSMEHEDS), 813-835 (PYDRYSHYHTENSHFQEDQDSHR), and 892-902 (EPRRSNDRRTS). Low complexity predominate over residues 926 to 937 (AEAASASSSRHS). Composition is skewed to polar residues over residues 950 to 963 (LNSSRHSSTDTPMY) and 973 to 982 (WLPNTSNVTR). Over residues 1005–1016 (PPFPRSITPPPV) the composition is skewed to pro residues. The span at 1020-1030 (ELKSQSNGRKS) shows a compositional bias: polar residues. Basic and acidic residues predominate over residues 1031-1040 (NYSEDGKRAK).

Belongs to the JHDM1 histone demethylase family. Fe(2+) is required as a cofactor.

The protein localises to the nucleus. It carries out the reaction N(6),N(6)-dimethyl-L-lysyl(36)-[histone H3] + 2 2-oxoglutarate + 2 O2 = L-lysyl(36)-[histone H3] + 2 formaldehyde + 2 succinate + 2 CO2. Its function is as follows. Histone demethylase that specifically demethylates 'Lys-36' of histone H3, thereby playing a central role in histone code. This is JmjC domain-containing histone demethylation protein 1 (jhdm-1) from Caenorhabditis briggsae.